We begin with the raw amino-acid sequence, 229 residues long: Endonuclease V (229 aa).

Residues aspartate 36 and aspartate 104 each coordinate Mg(2+).

It belongs to the endonuclease V family. Mg(2+) serves as cofactor.

It is found in the cytoplasm. The catalysed reaction is Endonucleolytic cleavage at apurinic or apyrimidinic sites to products with a 5'-phosphate.. In terms of biological role, DNA repair enzyme involved in the repair of deaminated bases. Selectively cleaves double-stranded DNA at the second phosphodiester bond 3' to a deoxyinosine leaving behind the intact lesion on the nicked DNA. This is Endonuclease V from Pectobacterium carotovorum subsp. carotovorum (strain PC1).